Here is a 159-residue protein sequence, read N- to C-terminus: Serine-protein kinase RsbW (159 aa).

The protein belongs to the anti-sigma-factor family.

The catalysed reaction is L-seryl-[protein] + ATP = O-phospho-L-seryl-[protein] + ADP + H(+). The enzyme catalyses L-threonyl-[protein] + ATP = O-phospho-L-threonyl-[protein] + ADP + H(+). Its function is as follows. Negative regulator of sigma-B activity. Phosphorylates and inactivates its specific antagonist protein, RsbV. Upon phosphorylation of RsbV, RsbW is released and binds to sigma-B, thereby blocking its ability to form an RNA polymerase holoenzyme (E-sigma-B). This Staphylococcus aureus protein is Serine-protein kinase RsbW.